Consider the following 354-residue polypeptide: Rhodopsin (354 aa).

Residues 1–36 (MNGTEGENFYVPMSNKTGVVRNPFEYPQYYLADHWM) are Extracellular-facing. Residues asparagine 2 and asparagine 15 are each glycosylated (N-linked (GlcNAc...) asparagine). Residues 37 to 61 (FAVLAAYMFFLIITGFPVNFLTLFV) traverse the membrane as a helical segment. Topologically, residues 62–73 (TIQNKKLRQPLN) are cytoplasmic. Residues 74-96 (YILLNLAVANLFMVFGGFTTTLI) form a helical membrane-spanning segment. Residues 97 to 110 (TSMNGYFVFGSTGC) lie on the Extracellular side of the membrane. Cysteine 110 and cysteine 187 are joined by a disulfide. A helical transmembrane segment spans residues 111-133 (NLEGFFATLGGEISLWSLVVLAI). A 'Ionic lock' involved in activated form stabilization motif is present at residues 134-136 (ERY). Residues 134–152 (ERYVVVCKPMSNFRFGSQH) lie on the Cytoplasmic side of the membrane. The chain crosses the membrane as a helical span at residues 153-173 (AIAGVSLTWVMAMACAAPPLV). Residues 174–202 (GWSRYIPEGLQCSCGIDYYTPKPEINNVS) lie on the Extracellular side of the membrane. Residue asparagine 200 is glycosylated (N-linked (GlcNAc...) asparagine). A helical membrane pass occupies residues 203–224 (FVIYMFVVHFSIPLTIIFFCYG). Over 225-252 (RLVCTVKAAAAQQQESETTQRAEREVTR) the chain is Cytoplasmic. A helical transmembrane segment spans residues 253–274 (MVVIMVIGFLICWLPYASVALY). The Extracellular segment spans residues 275–286 (IFNNQGSEFGPV). A helical transmembrane segment spans residues 287–308 (FMTIPSFFAKSSALYNPLIYIL). Position 296 is an N6-(retinylidene)lysine (lysine 296). At 309-354 (MNKQFRNCMITTLCCGKNPFEEEESTSASASKTEASSVSSSQVSPA) the chain is on the cytoplasmic side. Residues cysteine 322 and cysteine 323 are each lipidated (S-palmitoyl cysteine). A disordered region spans residues 333-354 (STSASASKTEASSVSSSQVSPA). The segment covering 334–354 (TSASASKTEASSVSSSQVSPA) has biased composition (low complexity).

This sequence belongs to the G-protein coupled receptor 1 family. Opsin subfamily. Post-translationally, phosphorylated on some or all of the serine and threonine residues present in the C-terminal region. In terms of processing, contains one covalently linked retinal chromophore.

It is found in the membrane. It localises to the cell projection. Its subcellular location is the cilium. The protein localises to the photoreceptor outer segment. In terms of biological role, photoreceptor required for image-forming vision at low light intensity. While most salt water fish species use retinal as chromophore, most freshwater fish use 3-dehydroretinal, or a mixture of retinal and 3-dehydroretinal. Light-induced isomerization of 11-cis to all-trans retinal triggers a conformational change that activates signaling via G-proteins. Subsequent receptor phosphorylation mediates displacement of the bound G-protein alpha subunit by arrestin and terminates signaling. In Galeus melastomus (Blackmouth catshark), this protein is Rhodopsin (rho).